The chain runs to 682 residues: Probable potassium transport system protein Kup (682 aa).

12 helical membrane passes run 13–33 (GLLVSIGIVYGDIGTSPLYVM), 55–75 (ISLILWTITLLTTVKYVLIAL), 98–118 (WLVIPALVGGAALLADGTLTP), 138–158 (IPVPNQNSVIMITIVILLFLF), 171–191 (TFGPIMLVWFTFLGLTGIMNL), 217–237 (VGVLILGAVFLATTGAEALYS), 250–270 (SWPYVFICLALNYLGQGVWIL), 295–315 (FFAIILATLAAIIASQALITG), 344–364 (LFIPSINKMLCAATIGIVFLF), 375–395 (GLAITVTMLMTTVLLFEYLSL), 405–425 (VFLLLFGAIETMFLISSLAKF), and 428–448 (GGYVTVIIAAFIGAIMYIWYF).

The protein belongs to the HAK/KUP transporter (TC 2.A.72) family.

It localises to the cell membrane. The enzyme catalyses K(+)(in) + H(+)(in) = K(+)(out) + H(+)(out). Transport of potassium into the cell. Likely operates as a K(+):H(+) symporter. The chain is Probable potassium transport system protein Kup from Lactobacillus gasseri (strain ATCC 33323 / DSM 20243 / BCRC 14619 / CIP 102991 / JCM 1131 / KCTC 3163 / NCIMB 11718 / NCTC 13722 / AM63).